Reading from the N-terminus, the 512-residue chain is Solute carrier family 40 member 2 (512 aa).

Residues 1–28 are disordered; that stretch reads MEEETETRVFLSNEQHQEEEEEEEEEPS. Over residues 17 to 27 the composition is skewed to acidic residues; that stretch reads QEEEEEEEEEP. The next 11 membrane-spanning stretches (helical) occupy residues 55-75, 105-125, 133-153, 187-207, 214-234, 310-330, 343-363, 376-396, 405-425, 442-462, and 468-488; these read VALY…MYGV, LVTQ…LLVV, FPVF…GVLS, GIDL…ISFV, ITFA…FISV, IVLP…FGTL, YIIG…TVLY, GVWS…SIWV, MLMA…LAVI, GVQN…GIIV, and FWML…LYTI.

The protein belongs to the ferroportin (FP) (TC 2.A.100) family. SLC40A subfamily.

Its subcellular location is the vacuole membrane. Its function is as follows. Vacuolar transporter that is involved in the transport of excess nickel into the vacuole under iron deficiency, increasing cellular tolerance to nickel under iron deficiency stress response. In Arabidopsis thaliana (Mouse-ear cress), this protein is Solute carrier family 40 member 2 (IREG2).